The sequence spans 574 residues: Myo-inositol transporter FST1 (574 aa).

Residues Met1–Thr76 lie on the Cytoplasmic side of the membrane. Residues Trp77–Ile97 form a helical membrane-spanning segment. Residues Ser98–Asn115 are Extracellular-facing. The chain crosses the membrane as a helical span at residues Ser116–Ala136. The Cytoplasmic portion of the chain corresponds to Asn137–Lys143. The chain crosses the membrane as a helical span at residues Gly144–Ile164. Residues Asn165 to Arg173 lie on the Extracellular side of the membrane. Residues Val174–Thr194 form a helical membrane-spanning segment. Topologically, residues Val195–Ser205 are cytoplasmic. The helical transmembrane segment at Leu206 to Leu226 threads the bilayer. Topologically, residues Asn227 to Arg233 are extracellular. Residues Tyr234–Pro254 form a helical membrane-spanning segment. At Glu255 to Asn330 the chain is on the cytoplasmic side. Residues Ile331–Leu351 form a helical membrane-spanning segment. Residues Met352–Asn363 are Extracellular-facing. A helical membrane pass occupies residues Tyr364–Met384. The Cytoplasmic segment spans residues Glu385–Arg390. The helical transmembrane segment at Phe391–Tyr411 threads the bilayer. The Extracellular segment spans residues Gln412 to Tyr426. The chain crosses the membrane as a helical span at residues Leu427–Val447. The Cytoplasmic portion of the chain corresponds to Pro448 to Asp465. The chain crosses the membrane as a helical span at residues Ala466–Met486. Over Gly487 to Gly490 the chain is Extracellular. Residues Leu491–Met511 form a helical membrane-spanning segment. The Cytoplasmic portion of the chain corresponds to Pro512–Ala574.

The protein belongs to the major facilitator superfamily. Sugar transporter (TC 2.A.1.1) family.

The protein localises to the cell membrane. The enzyme catalyses myo-inositol(out) + H(+)(out) = myo-inositol(in) + H(+)(in). Functionally, transporter for myo-inositol. Also appears to transport the polyketide mycotoxin fumonisin B1 (FB1). Does not appear to transport hexose sugars. This is Myo-inositol transporter FST1 from Gibberella moniliformis (strain M3125 / FGSC 7600) (Maize ear and stalk rot fungus).